We begin with the raw amino-acid sequence, 169 residues long: E1B protein, small T-antigen (169 aa).

The protein belongs to the adenoviridae E1B 19 kDa protein family.

The sequence is that of E1B protein, small T-antigen from Canis lupus familiaris (Dog).